A 572-amino-acid chain; its full sequence is Flagellin A (572 aa).

The protein belongs to the bacterial flagellin family. Heteromer of FlaA and FlaB. Interacts with FliW.

The protein resides in the secreted. It localises to the bacterial flagellum. Flagellin is the subunit protein which polymerizes to form the filaments of bacterial flagella. FlaA binds to flagellar assembly factor FliW protein, preventing FliW from binding to CsrA, so that CsrA can then bind flaA mRNA and represses its translation. The protein is Flagellin A (flaA) of Campylobacter jejuni subsp. jejuni serotype O:2 (strain ATCC 700819 / NCTC 11168).